A 220-amino-acid chain; its full sequence is Thiopurine S-methyltransferase (220 aa).

The S-adenosyl-L-methionine site is built by Trp-10, Leu-45, Glu-66, and Arg-123.

It belongs to the class I-like SAM-binding methyltransferase superfamily. TPMT family.

The protein resides in the cytoplasm. It catalyses the reaction S-adenosyl-L-methionine + a thiopurine = S-adenosyl-L-homocysteine + a thiopurine S-methylether.. In Pseudomonas syringae pv. tomato (strain ATCC BAA-871 / DC3000), this protein is Thiopurine S-methyltransferase.